A 358-amino-acid polypeptide reads, in one-letter code: Holliday junction branch migration complex subunit RuvB (358 aa).

Residues Met-1–Tyr-183 are large ATPase domain (RuvB-L). ATP contacts are provided by residues Leu-22, Arg-23, Gly-64, Lys-67, Thr-68, Thr-69, Glu-130–Phe-132, Arg-173, Tyr-183, and Arg-220. Position 68 (Thr-68) interacts with Mg(2+). The segment at Ser-184 to Glu-254 is small ATPAse domain (RuvB-S). The segment at Glu-257–Gly-358 is head domain (RuvB-H). Positions 312 and 317 each coordinate DNA.

Belongs to the RuvB family. As to quaternary structure, homohexamer. Forms an RuvA(8)-RuvB(12)-Holliday junction (HJ) complex. HJ DNA is sandwiched between 2 RuvA tetramers; dsDNA enters through RuvA and exits via RuvB. An RuvB hexamer assembles on each DNA strand where it exits the tetramer. Each RuvB hexamer is contacted by two RuvA subunits (via domain III) on 2 adjacent RuvB subunits; this complex drives branch migration. In the full resolvosome a probable DNA-RuvA(4)-RuvB(12)-RuvC(2) complex forms which resolves the HJ.

The protein localises to the cytoplasm. The enzyme catalyses ATP + H2O = ADP + phosphate + H(+). The RuvA-RuvB-RuvC complex processes Holliday junction (HJ) DNA during genetic recombination and DNA repair, while the RuvA-RuvB complex plays an important role in the rescue of blocked DNA replication forks via replication fork reversal (RFR). RuvA specifically binds to HJ cruciform DNA, conferring on it an open structure. The RuvB hexamer acts as an ATP-dependent pump, pulling dsDNA into and through the RuvAB complex. RuvB forms 2 homohexamers on either side of HJ DNA bound by 1 or 2 RuvA tetramers; 4 subunits per hexamer contact DNA at a time. Coordinated motions by a converter formed by DNA-disengaged RuvB subunits stimulates ATP hydrolysis and nucleotide exchange. Immobilization of the converter enables RuvB to convert the ATP-contained energy into a lever motion, pulling 2 nucleotides of DNA out of the RuvA tetramer per ATP hydrolyzed, thus driving DNA branch migration. The RuvB motors rotate together with the DNA substrate, which together with the progressing nucleotide cycle form the mechanistic basis for DNA recombination by continuous HJ branch migration. Branch migration allows RuvC to scan DNA until it finds its consensus sequence, where it cleaves and resolves cruciform DNA. This is Holliday junction branch migration complex subunit RuvB from Paenarthrobacter aurescens (strain TC1).